A 255-amino-acid chain; its full sequence is Small ribosomal subunit protein uS2 (255 aa).

This sequence belongs to the universal ribosomal protein uS2 family.

The chain is Small ribosomal subunit protein uS2 (rpsB) from Streptococcus pyogenes serotype M1.